A 327-amino-acid polypeptide reads, in one-letter code: MDLINGMGTSPGYWRTPREPGNDHRRARLDVMAQRIVITGAGGMVGRVLADQAAAKGHTVLALTSSQCDITDEDAVRRFVANGDVVINCAAYTQVDKAEDEPERAHAVNAVGPGNLAKACAAVDAGLIHISTDYVFGAVDRDTPYEVDDETGPVNIYGRTKLAGEQAVLAAKPDAYVVRTAWVYRGGDGSDFVATMRRLAAGDGAIDVVADQVGSPTYTGDLVGALLQIVDGGVEPGILHAANAGVASRFDQARATFEAVGADPERVRPCGSDRHPRPAPRPSYTVLSSQRSAQAGLTPLRDWREALQDAVAAVVGATTDGPLPSTP.

The disordered stretch occupies residues 1-22 (MDLINGMGTSPGYWRTPREPGN). NADH is bound by residues 43–45 (GMV), 69–70 (DI), and 91–93 (AYT). NADPH contacts are provided by residues 44-45 (MV), 69-70 (DI), and 91-93 (AYT). 132 to 133 (TD) contributes to the dTDP-beta-L-rhamnose binding site. NADH is bound by residues Tyr157 and Lys161. Residues Tyr157 and Lys161 each contribute to the NADPH site. The active-site Proton donor/acceptor is the Tyr157. Residue Trp182 participates in dTDP-beta-L-rhamnose binding. The span at 264–276 (PERVRPCGSDRHP) shows a compositional bias: basic and acidic residues. The disordered stretch occupies residues 264–292 (PERVRPCGSDRHPRPAPRPSYTVLSSQRS).

It belongs to the dTDP-4-dehydrorhamnose reductase family. Mg(2+) serves as cofactor.

The enzyme catalyses dTDP-beta-L-rhamnose + NADP(+) = dTDP-4-dehydro-beta-L-rhamnose + NADPH + H(+). Its pathway is carbohydrate biosynthesis; dTDP-L-rhamnose biosynthesis. Functionally, involved in the biosynthesis of the dTDP-L-rhamnose which is a component of the critical linker, D-N-acetylglucosamine-L-rhamnose disaccharide, which connects the galactan region of arabinogalactan to peptidoglycan via a phosphodiester linkage. Catalyzes the reduction of dTDP-6-deoxy-L-lyxo-4-hexulose to yield dTDP-L-rhamnose. This chain is dTDP-4-dehydrorhamnose reductase, found in Mycolicibacterium smegmatis (strain ATCC 700084 / mc(2)155) (Mycobacterium smegmatis).